The following is a 118-amino-acid chain: Large ribosomal subunit protein bL20 (118 aa).

Belongs to the bacterial ribosomal protein bL20 family.

Functionally, binds directly to 23S ribosomal RNA and is necessary for the in vitro assembly process of the 50S ribosomal subunit. It is not involved in the protein synthesizing functions of that subunit. The chain is Large ribosomal subunit protein bL20 from Hahella chejuensis (strain KCTC 2396).